We begin with the raw amino-acid sequence, 136 residues long: ATP synthase F(0) complex subunit C1, mitochondrial (136 aa).

Residues 1-61 constitute a mitochondrion transit peptide; that stretch reads MQTTGALLIS…REFQTSVVSR (61 aa). A helical membrane pass occupies residues 77 to 97; sequence VGVAGSGAGIGTVFGSLIIGY. Lysine 104 carries the post-translational modification N6,N6,N6-trimethyllysine. Residues 112-132 traverse the membrane as a helical segment; the sequence is ILGFALSEAMGLFCLMVAFLI.

The protein belongs to the ATPase C chain family. In terms of assembly, homooctamer; the c-ring consists of eight c subunits forming a circle, and each subunit adopts a hairpin shape. Component of the ATP synthase complex composed at least of ATP5F1A/subunit alpha, ATP5F1B/subunit beta, ATP5MC1/subunit c (homooctomer), MT-ATP6/subunit a, MT-ATP8/subunit 8, ATP5ME/subunit e, ATP5MF/subunit f, ATP5MG/subunit g, ATP5MK/subunit k, ATP5MJ/subunit j, ATP5F1C/subunit gamma, ATP5F1D/subunit delta, ATP5F1E/subunit epsilon, ATP5PF/subunit F6, ATP5PB/subunit b, ATP5PD/subunit d, ATP5PO/subunit OSCP. ATP synthase complex consists of a soluble F(1) head domain (subunits alpha(3) and beta(3)) - the catalytic core - and a membrane F(0) domain - the membrane proton channel (subunits c, a, 8, e, f, g, k and j). These two domains are linked by a central stalk (subunits gamma, delta, and epsilon) rotating inside the F1 region and a stationary peripheral stalk (subunits F6, b, d, and OSCP). Interacts with TMEM70 (homooligomer form); this interaction facilitates the oligomer formation of subunit c/ATP5MC1 (c-ring) and the c-ring membrane insertion and also protects ATP5MC1 against intramitochondrial proteolysis. Post-translationally, trimethylated by ATPSCKMT at Lys-104. Methylation is required for proper incorporation of the C subunit into the ATP synthase complex and mitochondrial respiration.

The protein resides in the mitochondrion membrane. The catalysed reaction is H(+)(in) = H(+)(out). In terms of biological role, subunit c, of the mitochondrial membrane ATP synthase complex (F(1)F(0) ATP synthase or Complex V) that produces ATP from ADP in the presence of a proton gradient across the membrane which is generated by electron transport complexes of the respiratory chain. ATP synthase complex consist of a soluble F(1) head domain - the catalytic core - and a membrane F(1) domain - the membrane proton channel. These two domains are linked by a central stalk rotating inside the F(1) region and a stationary peripheral stalk. During catalysis, ATP synthesis in the catalytic domain of F(1) is coupled via a rotary mechanism of the central stalk subunits to proton translocation. With the subunit a (MT-ATP6), forms the proton-conducting channel in the F(0) domain, that contains two crucial half-channels (inlet and outlet) that facilitate proton movement from the mitochondrial intermembrane space (IMS) into the matrix. Protons are taken up via the inlet half-channel and released through the outlet half-channel, following a Grotthuss mechanism. In Ovis aries (Sheep), this protein is ATP synthase F(0) complex subunit C1, mitochondrial.